Reading from the N-terminus, the 204-residue chain is Large ribosomal subunit protein uL4 (204 aa).

A disordered region spans residues 47–69; that stretch reads KAQKNRAAVSGGGKKPWRQKGTG.

This sequence belongs to the universal ribosomal protein uL4 family. Part of the 50S ribosomal subunit.

Its function is as follows. One of the primary rRNA binding proteins, this protein initially binds near the 5'-end of the 23S rRNA. It is important during the early stages of 50S assembly. It makes multiple contacts with different domains of the 23S rRNA in the assembled 50S subunit and ribosome. In terms of biological role, forms part of the polypeptide exit tunnel. This Teredinibacter turnerae (strain ATCC 39867 / T7901) protein is Large ribosomal subunit protein uL4.